Reading from the N-terminus, the 336-residue chain is Protein FPV127 (336 aa).

The interval 1 to 22 (MGGGLVLPTRDPPKEQDTSETA) is disordered.

The protein belongs to the poxviruses A16/G9/J5 family.

The sequence is that of Protein FPV127 from Vertebrata (FPV).